The chain runs to 84 residues: Large ribosomal subunit protein bL28 (84 aa).

Belongs to the bacterial ribosomal protein bL28 family.

The sequence is that of Large ribosomal subunit protein bL28 from Deinococcus geothermalis (strain DSM 11300 / CIP 105573 / AG-3a).